Consider the following 89-residue polypeptide: Protein M7 (89 aa).

Residues 1–25 (MAAMKSLATAILVVLLLRRLPRGLS) form the signal peptide. Disulfide bonds link C28-C65, C38-C54, C55-C80, and C67-C87.

This sequence belongs to the A9/FIL1 family. Tapetum of anthers.

The protein resides in the secreted. This is Protein M7 (M7) from Lilium henryi (Henry's lily).